We begin with the raw amino-acid sequence, 214 residues long: EEF1A lysine methyltransferase 1 (214 aa).

At Ser2 the chain carries N-acetylserine. The residue at position 2 (Ser2) is a Phosphoserine.

The protein belongs to the class I-like SAM-binding methyltransferase superfamily. EFM5 family.

It is found in the cytoplasm. It catalyses the reaction L-lysyl-[protein] + 3 S-adenosyl-L-methionine = N(6),N(6),N(6)-trimethyl-L-lysyl-[protein] + 3 S-adenosyl-L-homocysteine + 3 H(+). Its function is as follows. Protein-lysine methyltransferase that selectively catalyzes the trimethylation of EEF1A at 'Lys-79'. This is EEF1A lysine methyltransferase 1 from Mus musculus (Mouse).